We begin with the raw amino-acid sequence, 337 residues long: Pyridoxal 5'-phosphate synthase subunit PdxS (337 aa).

A D-ribose 5-phosphate-binding site is contributed by Asp65. Lys122 serves as the catalytic Schiff-base intermediate with D-ribose 5-phosphate. Gly194 contributes to the D-ribose 5-phosphate binding site. Lys206 is a D-glyceraldehyde 3-phosphate binding site. D-ribose 5-phosphate-binding positions include Gly255 and 276 to 277; that span reads GS.

Belongs to the PdxS/SNZ family. In terms of assembly, in the presence of PdxT, forms a dodecamer of heterodimers.

The catalysed reaction is aldehydo-D-ribose 5-phosphate + D-glyceraldehyde 3-phosphate + L-glutamine = pyridoxal 5'-phosphate + L-glutamate + phosphate + 3 H2O + H(+). Its pathway is cofactor biosynthesis; pyridoxal 5'-phosphate biosynthesis. Functionally, catalyzes the formation of pyridoxal 5'-phosphate from ribose 5-phosphate (RBP), glyceraldehyde 3-phosphate (G3P) and ammonia. The ammonia is provided by the PdxT subunit. Can also use ribulose 5-phosphate and dihydroxyacetone phosphate as substrates, resulting from enzyme-catalyzed isomerization of RBP and G3P, respectively. The protein is Pyridoxal 5'-phosphate synthase subunit PdxS of Pyrobaculum arsenaticum (strain DSM 13514 / JCM 11321 / PZ6).